Here is a 262-residue protein sequence, read N- to C-terminus: 3-methyl-2-oxobutanoate hydroxymethyltransferase (262 aa).

2 residues coordinate Mg(2+): Asp42 and Asp81. 3-methyl-2-oxobutanoate is bound by residues 42–43, Asp81, and Lys110; that span reads DS. Glu112 is a Mg(2+) binding site. The Proton acceptor role is filled by Glu180.

This sequence belongs to the PanB family. As to quaternary structure, homodecamer; pentamer of dimers. Mg(2+) serves as cofactor.

It localises to the cytoplasm. The enzyme catalyses 3-methyl-2-oxobutanoate + (6R)-5,10-methylene-5,6,7,8-tetrahydrofolate + H2O = 2-dehydropantoate + (6S)-5,6,7,8-tetrahydrofolate. It participates in cofactor biosynthesis; (R)-pantothenate biosynthesis; (R)-pantoate from 3-methyl-2-oxobutanoate: step 1/2. In terms of biological role, catalyzes the reversible reaction in which hydroxymethyl group from 5,10-methylenetetrahydrofolate is transferred onto alpha-ketoisovalerate to form ketopantoate. This Legionella pneumophila (strain Paris) protein is 3-methyl-2-oxobutanoate hydroxymethyltransferase.